The chain runs to 884 residues: Probable inorganic carbon transporter subunit DabA (884 aa).

Zn(2+) contacts are provided by cysteine 390, aspartate 392, histidine 582, and cysteine 597.

The protein belongs to the inorganic carbon transporter (TC 9.A.2) DabA family. Forms a complex with DabB. It depends on Zn(2+) as a cofactor.

It is found in the cell membrane. Its function is as follows. Part of an energy-coupled inorganic carbon pump. The protein is Probable inorganic carbon transporter subunit DabA of Staphylococcus saprophyticus subsp. saprophyticus (strain ATCC 15305 / DSM 20229 / NCIMB 8711 / NCTC 7292 / S-41).